The following is a 1543-amino-acid chain: ATP-binding cassette sub-family C member 2 (1543 aa).

Residues 1 to 26 (MDEFCNSTFWNLSLLKSPEADLPLCF) are Extracellular-facing. 2 N-linked (GlcNAc...) asparagine glycosylation sites follow: asparagine 6 and asparagine 11. A helical transmembrane segment spans residues 27–47 (EQTVLVWIPLGFLWLLAPWQL). At 48-67 (YRIYRSRTKRFAITKFYLAK) the chain is on the cytoplasmic side. The helical transmembrane segment at 68-88 (QVFVVCLLILAAIDLSLALTE) threads the bilayer. At 89–92 (DTGQ) the chain is on the extracellular side. Residues 93 to 113 (ATIPPVKYTNPILYLCTWLLV) traverse the membrane as a helical segment. At 114-125 (LVIQHCRQCCIQ) the chain is on the cytoplasmic side. Residues 126–146 (KNSWFLSMFWILSLLCGIFQF) form a helical membrane-spanning segment. The Extracellular portion of the chain corresponds to 147–164 (QTLIRALLQDSKSNMTYS). N-linked (GlcNAc...) asparagine glycosylation is present at asparagine 160. The chain crosses the membrane as a helical span at residues 165–185 (CLFFVSYGFQIVILILSAFSE). The Cytoplasmic segment spans residues 186–311 (SSDSTHAPSA…DFPKSWLVKA (126 aa)). The disordered stretch occupies residues 260–285 (LKKSQQSPEGTSHGLTKKQSQSQDVL). Polar residues predominate over residues 263 to 283 (SQQSPEGTSHGLTKKQSQSQD). Residues serine 279 and serine 281 each carry the phosphoserine modification. Residues 312–332 (LFKTFYVVILKSFILKLAHDI) traverse the membrane as a helical segment. An ABC transmembrane type-1 1 domain is found at 320-603 (ILKSFILKLA…LPMVISSVIQ (284 aa)). At 333-358 (LLFLNPQLLKFLIGFVKDPDSYPWVG) the chain is on the extracellular side. Residues 359 to 379 (YIYAILMFSVTLIQSFFLQCY) form a helical membrane-spanning segment. The Cytoplasmic segment spans residues 380–435 (FQFCFVLGMTVRTTIIASVYKKALTLSNLARRQYTIGETVNLMSVDSQKLMDVTNY). A helical transmembrane segment spans residues 436-456 (IHLLWSSVLQIALSIFFLWRE). Residues 457–459 (LGP) lie on the Extracellular side of the membrane. The chain crosses the membrane as a helical span at residues 460–480 (SILAGVGLMVLLVPVNGVLAT). Topologically, residues 481-542 (KIRKIQVQNM…NLLRFSQLQT (62 aa)) are cytoplasmic. Residues 543–563 (ILIFILHLTPTLVSVITFSVY) form a helical membrane-spanning segment. Residues 564–585 (VLVDSQNVLNAEKAFTSITLFN) are Extracellular-facing. The chain crosses the membrane as a helical span at residues 586 to 606 (ILRFPLAMLPMVISSVIQASV). Topologically, residues 607–969 (SVDRLEQYLG…VKFSIYLKYL (363 aa)) are cytoplasmic. In terms of domain architecture, ABC transporter 1 spans 635–859 (VQFSEASFTW…KGVFAKNWKT (225 aa)). 669–676 (GTVGSGKS) contributes to the ATP binding site. A Phosphoserine modification is found at serine 876. Residues 903–927 (RENSLRRTLSRSSRSGSRRGKSLKS) are disordered. Positions 908 to 917 (RRTLSRSSRS) are enriched in low complexity. Phosphoserine occurs at positions 924 and 928. The chain crosses the membrane as a helical span at residues 970 to 990 (QAVGWWSLLFIVIFYVLNYVA). One can recognise an ABC transmembrane type-1 2 domain in the interval 977 to 1262 (LLFIVIFYVL…LVRMTSEVET (286 aa)). Topologically, residues 991 to 1031 (FIGTNLWLSAWTSDSEKQNGTDNSPSQRDMRIGVFGALGIA) are extracellular. N-linked (GlcNAc...) asparagine glycosylation occurs at asparagine 1009. A helical membrane pass occupies residues 1032-1052 (QGIFLLSSSLWSIYACRNASK). Residues 1053–1095 (TLHRQLLTNILRAPMSFFDTTPTGRIVNRFAGDISTVDDTLPQ) lie on the Cytoplasmic side of the membrane. A helical membrane pass occupies residues 1096–1116 (TLRSWLLCFFGIVSTLVMICM). Residue alanine 1117 is a topological domain, extracellular. The helical transmembrane segment at 1118–1138 (TPIFIIIIIPLSILYVSVQVF) threads the bilayer. At 1139–1209 (YVATSRQLRR…TSNRWLAIRL (71 aa)) the chain is on the cytoplasmic side. A helical membrane pass occupies residues 1210 to 1230 (ELVGNLIVFCSALLLVIYKNS). The Extracellular portion of the chain corresponds to 1231 to 1232 (LT). A helical membrane pass occupies residues 1233-1253 (GDTVGFVLSNALNITQTLNWL). The Cytoplasmic segment spans residues 1254 to 1543 (VRMTSEVETN…GIESVNHTEL (290 aa)). The ABC transporter 2 domain occupies 1298 to 1532 (IQFNNYQVRY…MGPFYLMAKE (235 aa)). An ATP-binding site is contributed by 1332-1339 (GRTGAGKS). Serine 1436 bears the Phosphoserine mark.

It belongs to the ABC transporter superfamily. ABCC family. Conjugate transporter (TC 3.A.1.208) subfamily. As to expression, expressed in liver.

The protein localises to the apical cell membrane. It carries out the reaction an S-substituted glutathione(in) + ATP + H2O = an S-substituted glutathione(out) + ADP + phosphate + H(+). It catalyses the reaction taurolithocholate 3-sulfate(in) + ATP + H2O = taurolithocholate 3-sulfate(out) + ADP + phosphate + H(+). The catalysed reaction is ATP + H2O + xenobioticSide 1 = ADP + phosphate + xenobioticSide 2.. The enzyme catalyses leukotriene C4(in) + ATP + H2O = leukotriene C4(out) + ADP + phosphate + H(+). It carries out the reaction 17beta-estradiol 17-O-(beta-D-glucuronate)(in) + ATP + H2O = 17beta-estradiol 17-O-(beta-D-glucuronate)(out) + ADP + phosphate + H(+). It catalyses the reaction (4Z,15Z)-bilirubin IXalpha C8-beta-D-glucuronoside(in) + ATP + H2O = (4Z,15Z)-bilirubin IXalpha C8-beta-D-glucuronoside(out) + ADP + phosphate + H(+). The catalysed reaction is (4Z,15Z)-bilirubin IXalpha C8,C12-beta-D-bisglucuronoside(in) + ATP + H2O = (4Z,15Z)-bilirubin IXalpha C8,C12-beta-D-bisglucuronoside(out) + ADP + phosphate + H(+). Functionally, ATP-dependent transporter of the ATP-binding cassette (ABC) family that binds and hydrolyzes ATP to enable active transport of various substrates including many drugs, toxicants and endogenous compound across cell membranes. Transports a wide variety of conjugated organic anions such as sulfate-, glucuronide- and glutathione (GSH)-conjugates of endo- and xenobiotics substrates. Mediates hepatobiliary excretion of mono- and bis-glucuronidated bilirubin molecules and therefore play an important role in bilirubin detoxification. Mediates also hepatobiliary excretion of others glucuronide conjugates such as 17beta-estradiol 17-glucosiduronic acid and leukotriene C4. Transports sulfated bile salt such as taurolithocholate sulfate. Transports various anticancer drugs, such as anthracycline, vinca alkaloid and methotrexate and HIV-drugs such as protease inhibitors. This chain is ATP-binding cassette sub-family C member 2, found in Mus musculus (Mouse).